A 176-amino-acid polypeptide reads, in one-letter code: Large ribosomal subunit protein uL6 (176 aa).

This sequence belongs to the universal ribosomal protein uL6 family. As to quaternary structure, part of the 50S ribosomal subunit.

Functionally, this protein binds to the 23S rRNA, and is important in its secondary structure. It is located near the subunit interface in the base of the L7/L12 stalk, and near the tRNA binding site of the peptidyltransferase center. The polypeptide is Large ribosomal subunit protein uL6 (Burkholderia ambifaria (strain ATCC BAA-244 / DSM 16087 / CCUG 44356 / LMG 19182 / AMMD) (Burkholderia cepacia (strain AMMD))).